The primary structure comprises 222 residues: N-(5'-phosphoribosyl)anthranilate isomerase (222 aa).

This sequence belongs to the TrpF family.

It catalyses the reaction N-(5-phospho-beta-D-ribosyl)anthranilate = 1-(2-carboxyphenylamino)-1-deoxy-D-ribulose 5-phosphate. The protein operates within amino-acid biosynthesis; L-tryptophan biosynthesis; L-tryptophan from chorismate: step 3/5. This is N-(5'-phosphoribosyl)anthranilate isomerase from Rhizobium johnstonii (strain DSM 114642 / LMG 32736 / 3841) (Rhizobium leguminosarum bv. viciae).